The sequence spans 247 residues: 5-oxoprolinase subunit A (247 aa).

The protein belongs to the LamB/PxpA family. As to quaternary structure, forms a complex composed of PxpA, PxpB and PxpC.

It carries out the reaction 5-oxo-L-proline + ATP + 2 H2O = L-glutamate + ADP + phosphate + H(+). Functionally, catalyzes the cleavage of 5-oxoproline to form L-glutamate coupled to the hydrolysis of ATP to ADP and inorganic phosphate. In Vibrio vulnificus (strain YJ016), this protein is 5-oxoprolinase subunit A.